Consider the following 212-residue polypeptide: 3-isopropylmalate dehydratase small subunit (212 aa).

This sequence belongs to the LeuD family. LeuD type 1 subfamily. In terms of assembly, heterodimer of LeuC and LeuD.

The catalysed reaction is (2R,3S)-3-isopropylmalate = (2S)-2-isopropylmalate. Its pathway is amino-acid biosynthesis; L-leucine biosynthesis; L-leucine from 3-methyl-2-oxobutanoate: step 2/4. Functionally, catalyzes the isomerization between 2-isopropylmalate and 3-isopropylmalate, via the formation of 2-isopropylmaleate. This chain is 3-isopropylmalate dehydratase small subunit, found in Beutenbergia cavernae (strain ATCC BAA-8 / DSM 12333 / CCUG 43141 / JCM 11478 / NBRC 16432 / NCIMB 13614 / HKI 0122).